The chain runs to 392 residues: Phospho-N-acetylmuramoyl-pentapeptide-transferase (392 aa).

11 helical membrane-spanning segments follow: residues 24–44 (YLTMRAVMAALTALVIGLLAG), 76–96 (TMGGALILLSIAVSTLLWFDL), 100–120 (FVWIVLLVTLGFGTIGWVDDW), 137–157 (YFWQSVIGLLAALYLVFCISE), 170–190 (WVQSGFALDLPPKAGLLVPFF), 193–213 (VSYPLGVLGFVIMTYLVIVGA), 225–245 (GLAIMPVIMVGSALGIFAYVT), 262–282 (SGELLVYCAAMAGAGLAFLWF), 289–309 (VFMGDVGALALGASLGTIAVI), 314–334 (IVLAIMGGIFVVEALSVMLQV), and 369–389 (QVVIRFWIITMLLCLLGLSTL).

It belongs to the glycosyltransferase 4 family. MraY subfamily. It depends on Mg(2+) as a cofactor.

It localises to the cell inner membrane. The catalysed reaction is UDP-N-acetyl-alpha-D-muramoyl-L-alanyl-gamma-D-glutamyl-meso-2,6-diaminopimeloyl-D-alanyl-D-alanine + di-trans,octa-cis-undecaprenyl phosphate = di-trans,octa-cis-undecaprenyl diphospho-N-acetyl-alpha-D-muramoyl-L-alanyl-D-glutamyl-meso-2,6-diaminopimeloyl-D-alanyl-D-alanine + UMP. It functions in the pathway cell wall biogenesis; peptidoglycan biosynthesis. Its function is as follows. Catalyzes the initial step of the lipid cycle reactions in the biosynthesis of the cell wall peptidoglycan: transfers peptidoglycan precursor phospho-MurNAc-pentapeptide from UDP-MurNAc-pentapeptide onto the lipid carrier undecaprenyl phosphate, yielding undecaprenyl-pyrophosphoryl-MurNAc-pentapeptide, known as lipid I. This chain is Phospho-N-acetylmuramoyl-pentapeptide-transferase, found in Delftia acidovorans (strain DSM 14801 / SPH-1).